Reading from the N-terminus, the 71-residue chain is MHMSLEVLEQLESKVQSAVDNISLLKMELDELKEQNNKLQDENHQLRNEHVAWQERLRALLGKMDQMGESI.

A coiled-coil region spans residues 5 to 67 (LEVLEQLESK…RALLGKMDQM (63 aa)).

This sequence belongs to the ZapB family. Homodimer. The ends of the coiled-coil dimer bind to each other, forming polymers. Interacts with FtsZ.

It is found in the cytoplasm. In terms of biological role, non-essential, abundant cell division factor that is required for proper Z-ring formation. It is recruited early to the divisome by direct interaction with FtsZ, stimulating Z-ring assembly and thereby promoting cell division earlier in the cell cycle. Its recruitment to the Z-ring requires functional FtsA or ZipA. In Aeromonas hydrophila subsp. hydrophila (strain ATCC 7966 / DSM 30187 / BCRC 13018 / CCUG 14551 / JCM 1027 / KCTC 2358 / NCIMB 9240 / NCTC 8049), this protein is Cell division protein ZapB.